Reading from the N-terminus, the 295-residue chain is Acetyl-coenzyme A carboxylase carboxyl transferase subunit beta (295 aa).

Residues 1 to 20 (MSWLSKLMPSGIRTENTPAK) form a disordered region. One can recognise a CoA carboxyltransferase N-terminal domain in the interval 28-295 (LWEKCSNCGS…QPHPQDADAA (268 aa)). Residues cysteine 32, cysteine 35, cysteine 51, and cysteine 54 each contribute to the Zn(2+) site. Residues 32–54 (CSNCGSALYGPELEENLEVCPKC) form a C4-type zinc finger.

The protein belongs to the AccD/PCCB family. Acetyl-CoA carboxylase is a heterohexamer composed of biotin carboxyl carrier protein (AccB), biotin carboxylase (AccC) and two subunits each of ACCase subunit alpha (AccA) and ACCase subunit beta (AccD). It depends on Zn(2+) as a cofactor.

The protein resides in the cytoplasm. The enzyme catalyses N(6)-carboxybiotinyl-L-lysyl-[protein] + acetyl-CoA = N(6)-biotinyl-L-lysyl-[protein] + malonyl-CoA. The protein operates within lipid metabolism; malonyl-CoA biosynthesis; malonyl-CoA from acetyl-CoA: step 1/1. Functionally, component of the acetyl coenzyme A carboxylase (ACC) complex. Biotin carboxylase (BC) catalyzes the carboxylation of biotin on its carrier protein (BCCP) and then the CO(2) group is transferred by the transcarboxylase to acetyl-CoA to form malonyl-CoA. This chain is Acetyl-coenzyme A carboxylase carboxyl transferase subunit beta, found in Xanthomonas axonopodis pv. citri (strain 306).